A 381-amino-acid chain; its full sequence is Acetylornithine deacetylase (381 aa).

His-79 contacts Zn(2+). Asp-81 is an active-site residue. Zn(2+) is bound at residue Asp-111. Glu-143 is an active-site residue. Zn(2+)-binding residues include Glu-144, Glu-168, and His-354.

Belongs to the peptidase M20A family. ArgE subfamily. Homodimer. It depends on Zn(2+) as a cofactor. The cofactor is Co(2+). Glutathione serves as cofactor.

Its subcellular location is the cytoplasm. It carries out the reaction N(2)-acetyl-L-ornithine + H2O = L-ornithine + acetate. Its pathway is amino-acid biosynthesis; L-arginine biosynthesis; L-ornithine from N(2)-acetyl-L-ornithine (linear): step 1/1. Catalyzes the hydrolysis of the amide bond of N(2)-acetylated L-amino acids. Cleaves the acetyl group from N-acetyl-L-ornithine to form L-ornithine, an intermediate in L-arginine biosynthesis pathway, and a branchpoint in the synthesis of polyamines. This chain is Acetylornithine deacetylase, found in Buchnera aphidicola subsp. Acyrthosiphon pisum (strain APS) (Acyrthosiphon pisum symbiotic bacterium).